A 310-amino-acid polypeptide reads, in one-letter code: Homeobox protein Hox-A13a (310 aa).

The homeobox DNA-binding region spans G244–V303.

This sequence belongs to the Abd-B homeobox family.

It localises to the nucleus. In terms of biological role, sequence-specific transcription factor which is part of a developmental regulatory system that provides cells with specific positional identities on the anterior-posterior axis. The protein is Homeobox protein Hox-A13a (hoxa13a) of Danio rerio (Zebrafish).